Consider the following 408-residue polypeptide: Large ribosomal subunit protein uL4 (408 aa).

The interval 58-98 is disordered; the sequence is PYAVSKKAGHQTSAESWGTGRAVSRIPRVPGGGTHRAGQGA.

Belongs to the universal ribosomal protein uL4 family.

This is Large ribosomal subunit protein uL4 (RPL4) from Prunus armeniaca (Apricot).